The following is a 65-amino-acid chain: Cell death protein rpr (65 aa).

Interacts with Diap2 (via BIR2 domain).

Functionally, activator of apoptosis, as well as grim and hid, that acts on the effector Dredd. The chain is Cell death protein rpr (rpr) from Drosophila melanogaster (Fruit fly).